We begin with the raw amino-acid sequence, 188 residues long: Elongation factor P (188 aa).

The protein belongs to the elongation factor P family.

Its subcellular location is the cytoplasm. It functions in the pathway protein biosynthesis; polypeptide chain elongation. Functionally, involved in peptide bond synthesis. Stimulates efficient translation and peptide-bond synthesis on native or reconstituted 70S ribosomes in vitro. Probably functions indirectly by altering the affinity of the ribosome for aminoacyl-tRNA, thus increasing their reactivity as acceptors for peptidyl transferase. The polypeptide is Elongation factor P (Methylorubrum extorquens (strain CM4 / NCIMB 13688) (Methylobacterium extorquens)).